Reading from the N-terminus, the 440-residue chain is MESQQLSQHPHISHGSACASVTSKEVHTNQDPLDVSASKTEECEKASTKANSQQTTTPASSAVPENPHHASPQPASVPPPQNGPYPQQCMMTQNQANPSGWSFYGHPSMIPYTPYQMSPMYFPPGPQSQFPQYPSSVGTPLSTPSPESGNTFTDSSSADSDMTSTKKYVRPPPMLTSPNDFPNWVKTYIKFLQNSNLGGIIPTVNGKPVRQITDDELTFLYNTFQIFAPSQFLPTWVKDILSVDYTDIMKILSKSIEKMQSDTQEANDIVTLANLQYNGSTPADAFETKVTNIIDRLNNNGIHINNKVACQLIMRGLSGEYKFLRYTRHRHLNMTVAELFLDIHAIYEEQQGSRNSKPNYRRNLSDEKNDSRSYTNTTKPKVIARNPQKTNNSKSKTARAHNVSTSNNSPSTDNDSISKSTTEPIQLNNKHDLHLRPGTY.

Composition is skewed to polar residues over residues 1–10 (MESQQLSQHP), 48–60 (TKAN…TPAS), and 127–152 (QSQF…GNTF). Disordered regions lie at residues 1 to 93 (MESQ…MMTQ), 126 to 173 (PQSQ…RPPP), and 352 to 440 (GSRN…PGTY). Positions 153-165 (TDSSSADSDMTST) are enriched in low complexity. The segment at 299–401 (NNGIHINNKV…NSKSKTARAH (103 aa)) is RNA-binding. Positions 402–418 (NVSTSNNSPSTDNDSIS) are enriched in low complexity. Residue Ser-416 is modified to Phosphoserine. Residues 419-428 (KSTTEPIQLN) are compositionally biased toward polar residues. A compositionally biased stretch (basic and acidic residues) spans 429-440 (NKHDLHLRPGTY).

As to quaternary structure, homotrimer.

It is found in the cytoplasm. Functionally, capsid protein (CA) is the structural component of the virus-like particle (VLP), forming the shell that encapsulates the retrotransposons dimeric RNA genome. The particles are assembled from trimer-clustered units and there are holes in the capsid shells that allow for the diffusion of macromolecules. CA also has nucleocapsid-like chaperone activity, promoting primer tRNA(i)-Met annealing to the multipartite primer-binding site (PBS), dimerization of Ty1 RNA and initiation of reverse transcription. This is Transposon Ty1-LR4 Gag polyprotein (TY1A-LR4) from Saccharomyces cerevisiae (strain ATCC 204508 / S288c) (Baker's yeast).